The chain runs to 339 residues: Phenylalanine--tRNA ligase alpha subunit (339 aa).

Glu253 lines the Mg(2+) pocket.

It belongs to the class-II aminoacyl-tRNA synthetase family. Phe-tRNA synthetase alpha subunit type 1 subfamily. In terms of assembly, tetramer of two alpha and two beta subunits. The cofactor is Mg(2+).

Its subcellular location is the cytoplasm. The catalysed reaction is tRNA(Phe) + L-phenylalanine + ATP = L-phenylalanyl-tRNA(Phe) + AMP + diphosphate + H(+). This Ruthia magnifica subsp. Calyptogena magnifica protein is Phenylalanine--tRNA ligase alpha subunit.